We begin with the raw amino-acid sequence, 754 residues long: Elongation factor G-1, mitochondrial (754 aa).

The N-terminal 17 residues, 1–17 (MARFPTSPAPNRLLRLF), are a transit peptide targeting the mitochondrion. In terms of domain architecture, tr-type G spans 63–340 (DKLRNIGISA…GVVSFLPSPN (278 aa)). GTP contacts are provided by residues 72-79 (AHIDSGKT), 139-143 (DTPGH), and 193-196 (NKLD).

This sequence belongs to the TRAFAC class translation factor GTPase superfamily. Classic translation factor GTPase family. EF-G/EF-2 subfamily. Expressed in cotyledons and adult leaves at the same levels.

The protein localises to the mitochondrion. It participates in protein biosynthesis; polypeptide chain elongation. Its function is as follows. Mitochondrial GTPase that catalyzes the GTP-dependent ribosomal translocation step during translation elongation. During this step, the ribosome changes from the pre-translocational (PRE) to the post-translocational (POST) state as the newly formed A-site-bound peptidyl-tRNA and P-site-bound deacylated tRNA move to the P and E sites, respectively. Catalyzes the coordinated movement of the two tRNA molecules, the mRNA and conformational changes in the ribosome. This chain is Elongation factor G-1, mitochondrial (MEFG1), found in Arabidopsis thaliana (Mouse-ear cress).